A 164-amino-acid chain; its full sequence is Neurotrophin-3 (164 aa).

Residues 1–3 form the signal peptide; it reads IQS. Positions 4–120 are excised as a propeptide; sequence TNMDQQGSLT…ALNRTSRRKR (117 aa). Asn113 carries N-linked (GlcNAc...) asparagine glycosylation.

This sequence belongs to the NGF-beta family.

It localises to the secreted. Functionally, seems to promote the survival of visceral and proprioceptive sensory neurons. The sequence is that of Neurotrophin-3 (NTF3) from Sanzinia madagascariensis (Madagascar tree boa).